Consider the following 478-residue polypeptide: MSATINPVVDNSVFTDCEVADLSLADWGRKEIAIAETEMPGLMALREQYAGKKPLAGARIAGSLHMTIQTAVLIETLVALGAEVRWASCNIFSTQDHAAAAIAARDIPVFAYKGESLKEYWDYAHQIFEWTSDGSHAANMILDDGGDATLLLILGSRAERDPSVIANPSNEEEQVLFASIRSRLTSHPGWYSRNLAGIRGVTEETTTGVHRLYEMEKKGELPFPAINVNDSVTKSKFDNLYGCRESLVDGIKRATDVMIAGKIAVICGYGDVGKGCAQSLRGLGATVWITEIDPICALQAAMEGYRVVTMDDACDKADIFVTATGNLRVITHDHMLKMKNQAIVCNIGHFDSEIDIASVQKYQWENIKPQVDHVIFPTGRRIIVLAQGRLVNLGCATGHPSFVMSSSFTNQVLAQMELWQNGKDYQKKVYVLPKQLDEMVARLHLGKLGVKLTELTDEQAHYLNLDKNGPYKPEMYRY.

Thr67, Asp144, and Glu204 together coordinate substrate. 205–207 lines the NAD(+) pocket; sequence TTT. Substrate is bound by residues Lys234 and Asp238. NAD(+) is bound by residues Asn239, 268–273, Glu291, Asn326, 347–349, and Asn392; these read GYGDVG and IGH.

It belongs to the adenosylhomocysteinase family. The cofactor is NAD(+).

Its subcellular location is the cytoplasm. It carries out the reaction S-adenosyl-L-homocysteine + H2O = L-homocysteine + adenosine. It functions in the pathway amino-acid biosynthesis; L-homocysteine biosynthesis; L-homocysteine from S-adenosyl-L-homocysteine: step 1/1. Functionally, may play a key role in the regulation of the intracellular concentration of adenosylhomocysteine. This Nitrosomonas eutropha (strain DSM 101675 / C91 / Nm57) protein is Adenosylhomocysteinase.